We begin with the raw amino-acid sequence, 274 residues long: MAIHLYKTSTPSTRNGAVDSQVKSNPRNNLIYGQHHCGKGRNARGIITVRHRGGGHKRLYRKIDFRRNTKDIYGRIVTIEYDPNRNAYICLIHYGDGEKRYILHPRGAIIGDTIVSGTEVPIKMGNALPLTDMPLGTAIHNIEITLGKGGQLARAAGAVAKLIAKEGKSATLKLPSGEVRLISKNCSATVGQVGNVGVNQKSLGRAGSKCWLGKRPVVRGVVMNPVDHPHGGGEGRAPIGRKKPVTPWGYPALGRRTRKRKKYSETLILRRRSK.

Disordered regions lie at residues 1–22 (MAIH…DSQV) and 225–254 (PVDH…PALG).

The protein belongs to the universal ribosomal protein uL2 family. In terms of assembly, part of the 50S ribosomal subunit.

It is found in the plastid. The protein resides in the chloroplast. The protein is Large ribosomal subunit protein uL2c (rpl2) of Sinapis alba (White mustard).